The following is a 355-amino-acid chain: 3-isopropylmalate dehydrogenase (355 aa).

Residues arginine 98, arginine 108, arginine 132, and aspartate 223 each contribute to the substrate site. Residues aspartate 223, aspartate 247, and aspartate 251 each coordinate Mg(2+). NAD(+) is bound at residue 283-295 (GSAPDIAGQQKAD).

The protein belongs to the isocitrate and isopropylmalate dehydrogenases family. LeuB type 2 subfamily. In terms of assembly, homodimer. Mg(2+) serves as cofactor. It depends on Mn(2+) as a cofactor.

The protein localises to the cytoplasm. The enzyme catalyses (2R,3S)-3-isopropylmalate + NAD(+) = 4-methyl-2-oxopentanoate + CO2 + NADH. The protein operates within amino-acid biosynthesis; L-leucine biosynthesis; L-leucine from 3-methyl-2-oxobutanoate: step 3/4. In terms of biological role, catalyzes the oxidation of 3-carboxy-2-hydroxy-4-methylpentanoate (3-isopropylmalate) to 3-carboxy-4-methyl-2-oxopentanoate. The product decarboxylates to 4-methyl-2 oxopentanoate. This chain is 3-isopropylmalate dehydrogenase, found in Clavibacter michiganensis subsp. michiganensis (strain NCPPB 382).